A 513-amino-acid polypeptide reads, in one-letter code: ATP synthase subunit alpha (513 aa).

169 to 176 (GDRQVGKT) lines the ATP pocket.

This sequence belongs to the ATPase alpha/beta chains family. F-type ATPases have 2 components, CF(1) - the catalytic core - and CF(0) - the membrane proton channel. CF(1) has five subunits: alpha(3), beta(3), gamma(1), delta(1), epsilon(1). CF(0) has three main subunits: a(1), b(2) and c(9-12). The alpha and beta chains form an alternating ring which encloses part of the gamma chain. CF(1) is attached to CF(0) by a central stalk formed by the gamma and epsilon chains, while a peripheral stalk is formed by the delta and b chains.

It localises to the cell inner membrane. It carries out the reaction ATP + H2O + 4 H(+)(in) = ADP + phosphate + 5 H(+)(out). In terms of biological role, produces ATP from ADP in the presence of a proton gradient across the membrane. The alpha chain is a regulatory subunit. This chain is ATP synthase subunit alpha, found in Aeromonas salmonicida (strain A449).